Here is a 130-residue protein sequence, read N- to C-terminus: Small ribosomal subunit protein uS9 (130 aa).

The protein belongs to the universal ribosomal protein uS9 family.

The protein is Small ribosomal subunit protein uS9 of Phytoplasma australiense.